The following is a 713-amino-acid chain: Zinc finger and BTB domain-containing protein 1 (713 aa).

Lys-3 is covalently cross-linked (Glycyl lysine isopeptide (Lys-Gly) (interchain with G-Cter in SUMO2)). A BTB domain is found at 24–91 (CDCCIAIDDI…MYLGKIMTAP (68 aa)). Residues Lys-200 and Lys-205 each participate in a glycyl lysine isopeptide (Lys-Gly) (interchain with G-Cter in SUMO2) cross-link. The C2H2-type 1; atypical zinc finger occupies 216-242 (FTCDSCGFGFSCEKLLDEHVLTCTNRH). Glycyl lysine isopeptide (Lys-Gly) (interchain with G-Cter in SUMO2) cross-links involve residues Lys-261, Lys-266, Lys-276, Lys-284, Lys-304, Lys-316, Lys-328, Lys-340, and Lys-346. A disordered region spans residues 270–319 (AEKDSSKTFSAQPDKYREDANQAPDDSASTTGSRKSTVEAGIAGEEKSRA). Ser-355 carries the phosphoserine modification. The residue at position 356 (Thr-356) is a Phosphothreonine. Residue Lys-381 forms a Glycyl lysine isopeptide (Lys-Gly) (interchain with G-Cter in SUMO2) linkage. The C2H2-type 2; atypical zinc-finger motif lies at 448 to 470 (CACGKCGQILVKGRQLQEHAQRC). Residue Lys-528 forms a Glycyl lysine isopeptide (Lys-Gly) (interchain with G-Cter in SUMO2) linkage. The segment at 533–558 (PFRCPNCGQRFETENLVVEHMSSCLD) adopts a UBZ-type zinc-finger fold. Lys-563 participates in a covalent cross-link: Glycyl lysine isopeptide (Lys-Gly) (interchain with G-Cter in SUMO2). 5 consecutive C2H2-type zinc fingers follow at residues 578–600 (HFCNLCGKGFYQRCHLREHYTVH), 606–628 (FVCQTCGKQFLRERQLRLHNDMH), 634–656 (YVCSICDQGNFRKHDHVRHMISH), 662–684 (TICQVCFQIFPNNEQLEQHMDVH), and 686–709 (YTCGICGAKFNLRKDMRSHYNAKH).

Homodimer. Homodimer. Interacts (via BTB domain) with TRIM28 (unphosphorylated or phosphorylated form). Post-translationally, sumoylated with SUMO2 at Lys-328 and to a lesser extent at Lys-266. Sumoylation inhibits its transcriptional repression activity and regulates its subcellular localization. As to expression, expressed strongly in thymus and spleen, less in lymph nodes and peripheral blood mononuclear cells (PBMCs) and weakly in bone marrow. Strongly expressed in immature, but weakly in mature bone marrow-lymphocyte B.

It is found in the nucleus. Its subcellular location is the nucleoplasm. Its function is as follows. Acts as a transcriptional repressor. Represses cAMP-responsive element (CRE)-mediated transcriptional activation. In addition, has a role in translesion DNA synthesis. Requires for UV-inducible RAD18 loading, PCNA monoubiquitination, POLH recruitment to replication factories and efficient translesion DNA synthesis. Plays a key role in the transcriptional regulation of T lymphocyte development. This Mus musculus (Mouse) protein is Zinc finger and BTB domain-containing protein 1 (Zbtb1).